Reading from the N-terminus, the 410-residue chain is LL-diaminopimelate aminotransferase (410 aa).

The substrate site is built by tyrosine 15 and glycine 42. Pyridoxal 5'-phosphate is bound by residues tyrosine 72, 108 to 109 (AK), tyrosine 132, asparagine 187, tyrosine 218, and 246 to 248 (SFS). Substrate-binding residues include lysine 109, tyrosine 132, and asparagine 187. Lysine 249 is subject to N6-(pyridoxal phosphate)lysine. Residues arginine 257 and asparagine 292 each coordinate pyridoxal 5'-phosphate. Residues asparagine 292 and arginine 388 each contribute to the substrate site.

Belongs to the class-I pyridoxal-phosphate-dependent aminotransferase family. LL-diaminopimelate aminotransferase subfamily. Homodimer. The cofactor is pyridoxal 5'-phosphate.

It carries out the reaction (2S,6S)-2,6-diaminopimelate + 2-oxoglutarate = (S)-2,3,4,5-tetrahydrodipicolinate + L-glutamate + H2O + H(+). It functions in the pathway amino-acid biosynthesis; L-lysine biosynthesis via DAP pathway; LL-2,6-diaminopimelate from (S)-tetrahydrodipicolinate (aminotransferase route): step 1/1. Involved in the synthesis of meso-diaminopimelate (m-DAP or DL-DAP), required for both lysine and peptidoglycan biosynthesis. Catalyzes the direct conversion of tetrahydrodipicolinate to LL-diaminopimelate. The chain is LL-diaminopimelate aminotransferase from Picosynechococcus sp. (strain ATCC 27264 / PCC 7002 / PR-6) (Agmenellum quadruplicatum).